The primary structure comprises 492 residues: Bifunctional purine biosynthesis protein PurH (492 aa).

The 144-residue stretch at 1–144 folds into the MGS-like domain; sequence MRKALLSVSD…KNFRHVITVV (144 aa).

This sequence belongs to the PurH family.

It catalyses the reaction (6R)-10-formyltetrahydrofolate + 5-amino-1-(5-phospho-beta-D-ribosyl)imidazole-4-carboxamide = 5-formamido-1-(5-phospho-D-ribosyl)imidazole-4-carboxamide + (6S)-5,6,7,8-tetrahydrofolate. The catalysed reaction is IMP + H2O = 5-formamido-1-(5-phospho-D-ribosyl)imidazole-4-carboxamide. It functions in the pathway purine metabolism; IMP biosynthesis via de novo pathway; 5-formamido-1-(5-phospho-D-ribosyl)imidazole-4-carboxamide from 5-amino-1-(5-phospho-D-ribosyl)imidazole-4-carboxamide (10-formyl THF route): step 1/1. The protein operates within purine metabolism; IMP biosynthesis via de novo pathway; IMP from 5-formamido-1-(5-phospho-D-ribosyl)imidazole-4-carboxamide: step 1/1. The chain is Bifunctional purine biosynthesis protein PurH from Macrococcus caseolyticus (strain JCSC5402) (Macrococcoides caseolyticum).